The following is a 580-amino-acid chain: MAAKSDGAAAVAGPGPEGPAGADRGGAGGRGEVAAGIAGPGPVEAGCPGPRYELRDCCWVLCALLVFFSDGATDLWLAASYYLQGQSTYFGLTLLFVLLPSLVVQLLSFRWFVYDYSEPTGTPGPAVSTKDSDIVGAAISTKDSAVAFRTKEGSPELVPRPAPSSAGAYRRRCCRLCVWLLQTLVHLLQLGQVWRYLRALYLGLQSRWRGERLRRHFYWRMLFESADVSMLRLLETFLRSAPQLVLQLSLLVHRGREPELLTALSISASLVSLAWTLASYQKVLRDSRDDKRPLSYKGAVVQVLWHLFTIAARTLAFALFASVYRLYFGIFIVAHWCIMTFWVIQGETDFCMSKWEEIIYNMVVGIIYIFCWFNVKEGRSRRRVTLYYCIVLLENAALTGFWYSSRNFSTDFYSLILVCVVASSFALGIFFMCVYYCLLHPNGPMLGPQAPGCIFPEAPGPCGPPADAITSPPRSLPRTTGAERDGAAVGGERAGTPTPPVFQVRPGLPPTPVARPLRTEGPVIRIDLPRKKYPAWDAHFIDRRLRKTILALEYSSPATPRLQYRSMGTSQELLEYETTV.

Residues Met1–Ala22 show a composition bias toward low complexity. The tract at residues Met1–Gly28 is disordered. 8 helical membrane-spanning segments follow: residues Trp59–Ala79, Tyr89–Phe109, Leu260–Tyr280, Val303–Val323, Leu326–Gly346, Trp355–Val375, Val384–Ser404, and Leu415–Tyr435. A disordered region spans residues Thr470–Pro516.

Belongs to the XK family.

The protein localises to the cell membrane. In Rattus norvegicus (Rat), this protein is XK-related protein 7.